The chain runs to 81 residues: Centromere protein X (81 aa).

Position 1 is an N-acetylmethionine (M1).

Belongs to the CENP-X/MHF2 family. Heterodimer with CENPX, sometimes called MHF; this interaction stabilizes both partners. MHF heterodimers can assemble to form tetrameric structures. MHF also coassemble with CENPT-CENPW heterodimers at centromeres to form the tetrameric CENP-T-W-S-X complex. Forms a discrete complex with FANCM and CENPX, called FANCM-MHF; this interaction, probably mediated by direct binding between CENPS and FANCM, leads to synergistic activation of double-stranded DNA binding and strongly stimulates FANCM-mediated DNA remodeling. Recruited by FANCM to the Fanconi anemia (FA) core complex, which consists of CENPS, CENPX, FANCA, FANCB, FANCC, FANCE, FANCF, FANCG, FANCL, FANCM, FAAP24 and FAAP100. The FA core complex associates with Bloom syndrome (BLM) complex, which consists of at least BLM, DNA topoisomerase 3-alpha (TOP3A), RMI1/BLAP75, RPA1/RPA70 and RPA2/RPA32. The super complex between FA and BLM is called BRAFT.

Its subcellular location is the nucleus. The protein localises to the chromosome. It is found in the centromere. The protein resides in the kinetochore. In terms of biological role, DNA-binding component of the Fanconi anemia (FA) core complex. Required for the normal activation of the FA pathway, leading to monoubiquitination of the FANCI-FANCD2 complex in response to DNA damage, cellular resistance to DNA cross-linking drugs, and prevention of chromosomal breakage. In complex with CENPS (MHF heterodimer), crucial cofactor for FANCM in both binding and ATP-dependent remodeling of DNA. Stabilizes FANCM. In complex with CENPS and FANCM (but not other FANC proteins), rapidly recruited to blocked forks and promotes gene conversion at blocked replication forks. In complex with CENPS, CENPT and CENPW (CENP-T-W-S-X heterotetramer), involved in the formation of a functional kinetochore outer plate, which is essential for kinetochore-microtubule attachment and faithful mitotic progression. As a component of MHF and CENP-T-W-S-X complexes, binds DNA and bends it to form a nucleosome-like structure. DNA-binding function is fulfilled in the presence of CENPS, with the following preference for DNA substates: Holliday junction &gt; double-stranded &gt; splay arm &gt; single-stranded. Does not bind DNA on its own. This Pongo abelii (Sumatran orangutan) protein is Centromere protein X (CENPX).